The chain runs to 298 residues: MQLEKMITEGSNAASAEIDRVSTLEMCRIINDEDKTVPLAVERVLPDIAAAIDVIHAQVSGGGRLIYLGAGTSGRLGILDASECPPTYGVKPGLVVGLIAGGEYAIQHAVEGAEDSREGGVNDLKNIGLTAQDVVVGIAASGRTPYVIAGLEYARQLGCRTVGISCNPGSAVSSTAEFAITPVVGAEVVTGSSRMKAGTAQKLVLNMLSTGLMIKSGKVFGNLMVDVVATNEKLHVRQVNIVKNATGCNAEQAEAALIACERNCKTAIVMVLKNLDADEAKKCLDQHGGFIRKALEKE.

In terms of domain architecture, SIS spans 55–218 (IHAQVSGGGR…STGLMIKSGK (164 aa)). The active-site Proton donor is glutamate 83. Residue glutamate 114 is part of the active site.

Belongs to the GCKR-like family. MurNAc-6-P etherase subfamily. Homodimer.

The enzyme catalyses N-acetyl-D-muramate 6-phosphate + H2O = N-acetyl-D-glucosamine 6-phosphate + (R)-lactate. It participates in amino-sugar metabolism; 1,6-anhydro-N-acetylmuramate degradation. The protein operates within amino-sugar metabolism; N-acetylmuramate degradation. It functions in the pathway cell wall biogenesis; peptidoglycan recycling. Functionally, specifically catalyzes the cleavage of the D-lactyl ether substituent of MurNAc 6-phosphate, producing GlcNAc 6-phosphate and D-lactate. Together with AnmK, is also required for the utilization of anhydro-N-acetylmuramic acid (anhMurNAc) either imported from the medium or derived from its own cell wall murein, and thus plays a role in cell wall recycling. The sequence is that of N-acetylmuramic acid 6-phosphate etherase from Escherichia coli O81 (strain ED1a).